The following is a 392-amino-acid chain: Heat-inducible transcription repressor HrcA (392 aa).

The protein belongs to the HrcA family.

Functionally, negative regulator of class I heat shock genes (grpE-dnaK-dnaJ and groELS operons). Prevents heat-shock induction of these operons. The chain is Heat-inducible transcription repressor HrcA from Chlamydia trachomatis serovar L2 (strain ATCC VR-902B / DSM 19102 / 434/Bu).